The following is a 489-amino-acid chain: Rhamnulokinase (489 aa).

A13–R17 is an ATP binding site. C68 and C222 are joined by a disulfide. Substrate is bound by residues G83 and H236–T238. D237 functions as the Proton acceptor in the catalytic mechanism. T259 provides a ligand contact to ATP. Substrate is bound at residue N296. ATP is bound at residue Q304. The cysteines at positions 353 and 370 are disulfide-linked. G402 lines the ATP pocket. A disulfide bridge connects residues C413 and C417.

This sequence belongs to the rhamnulokinase family. Monomer. Mg(2+) is required as a cofactor.

It catalyses the reaction L-rhamnulose + ATP = L-rhamnulose 1-phosphate + ADP + H(+). Its pathway is carbohydrate degradation; L-rhamnose degradation; glycerone phosphate from L-rhamnose: step 2/3. In terms of biological role, involved in the catabolism of L-rhamnose (6-deoxy-L-mannose). Catalyzes the transfer of the gamma-phosphate group from ATP to the 1-hydroxyl group of L-rhamnulose to yield L-rhamnulose 1-phosphate. This is Rhamnulokinase from Escherichia coli O7:K1 (strain IAI39 / ExPEC).